The following is a 601-amino-acid chain: Glutamyl-tRNA(Gln) amidotransferase subunit B, mitochondrial (601 aa).

A mitochondrion-targeting transit peptide spans 1 to 55 (MLRPWLRQCPRATRSLACPQCHLPRPQTARRALRPLPALSLSHPIRSLQTTTTES).

It belongs to the GatB/GatE family. GatB subfamily. Subunit of the heterotrimeric GatCAB amidotransferase (AdT) complex, composed of A, B and C subunits.

It is found in the mitochondrion. It catalyses the reaction L-glutamyl-tRNA(Gln) + L-glutamine + ATP + H2O = L-glutaminyl-tRNA(Gln) + L-glutamate + ADP + phosphate + H(+). Functionally, allows the formation of correctly charged Gln-tRNA(Gln) through the transamidation of misacylated Glu-tRNA(Gln) in the mitochondria. The reaction takes place in the presence of glutamine and ATP through an activated gamma-phospho-Glu-tRNA(Gln). This chain is Glutamyl-tRNA(Gln) amidotransferase subunit B, mitochondrial, found in Aspergillus niger (strain ATCC MYA-4892 / CBS 513.88 / FGSC A1513).